The primary structure comprises 284 residues: MQLIDGKAISAKVKEEVKNEAAQLTEKGVVPCLAVILVGDDKASQTYVNSKEKACKACGIRSLKYTLEANTSESALIDLIQSLNENDEVDGILVQLPLPKHIDENKILEKISCEKDVDGFHAVNVGRLVSGLDGFVPCTPCGIMRLFKEYDIEISGKNAVVIGRSNIVGKPMANLLLNANATVTVTHSKTQNLAKITKDADIIVVAIGKPNFLKADMVKNGAVVIDVGINRLENNKLVGDADFENVANKCSFITPVPGGVGPMTIAMLLKNTIKSAKNRLKRLK.

Residues 163 to 165 (GRS), S188, and I229 each bind NADP(+).

It belongs to the tetrahydrofolate dehydrogenase/cyclohydrolase family. Homodimer.

The enzyme catalyses (6R)-5,10-methylene-5,6,7,8-tetrahydrofolate + NADP(+) = (6R)-5,10-methenyltetrahydrofolate + NADPH. It carries out the reaction (6R)-5,10-methenyltetrahydrofolate + H2O = (6R)-10-formyltetrahydrofolate + H(+). The protein operates within one-carbon metabolism; tetrahydrofolate interconversion. Its function is as follows. Catalyzes the oxidation of 5,10-methylenetetrahydrofolate to 5,10-methenyltetrahydrofolate and then the hydrolysis of 5,10-methenyltetrahydrofolate to 10-formyltetrahydrofolate. This Campylobacter hominis (strain ATCC BAA-381 / DSM 21671 / CCUG 45161 / LMG 19568 / NCTC 13146 / CH001A) protein is Bifunctional protein FolD.